Consider the following 514-residue polypeptide: ATP synthase subunit alpha (514 aa).

170–177 lines the ATP pocket; it reads GDRQIGKT.

This sequence belongs to the ATPase alpha/beta chains family. In terms of assembly, F-type ATPases have 2 components, CF(1) - the catalytic core - and CF(0) - the membrane proton channel. CF(1) has five subunits: alpha(3), beta(3), gamma(1), delta(1), epsilon(1). CF(0) has three main subunits: a(1), b(2) and c(9-12). The alpha and beta chains form an alternating ring which encloses part of the gamma chain. CF(1) is attached to CF(0) by a central stalk formed by the gamma and epsilon chains, while a peripheral stalk is formed by the delta and b chains.

The protein localises to the cell inner membrane. It carries out the reaction ATP + H2O + 4 H(+)(in) = ADP + phosphate + 5 H(+)(out). Produces ATP from ADP in the presence of a proton gradient across the membrane. The alpha chain is a regulatory subunit. The sequence is that of ATP synthase subunit alpha from Pseudomonas entomophila (strain L48).